The following is a 115-amino-acid chain: Large ribosomal subunit protein uL22 (115 aa).

This sequence belongs to the universal ribosomal protein uL22 family. Part of the 50S ribosomal subunit.

Its function is as follows. This protein binds specifically to 23S rRNA; its binding is stimulated by other ribosomal proteins, e.g. L4, L17, and L20. It is important during the early stages of 50S assembly. It makes multiple contacts with different domains of the 23S rRNA in the assembled 50S subunit and ribosome. In terms of biological role, the globular domain of the protein is located near the polypeptide exit tunnel on the outside of the subunit, while an extended beta-hairpin is found that lines the wall of the exit tunnel in the center of the 70S ribosome. The sequence is that of Large ribosomal subunit protein uL22 from Coxiella burnetii (strain CbuK_Q154) (Coxiella burnetii (strain Q154)).